The sequence spans 476 residues: Aspartyl/glutamyl-tRNA(Asn/Gln) amidotransferase subunit B (476 aa).

The protein belongs to the GatB/GatE family. GatB subfamily. Heterotrimer of A, B and C subunits.

The enzyme catalyses L-glutamyl-tRNA(Gln) + L-glutamine + ATP + H2O = L-glutaminyl-tRNA(Gln) + L-glutamate + ADP + phosphate + H(+). It carries out the reaction L-aspartyl-tRNA(Asn) + L-glutamine + ATP + H2O = L-asparaginyl-tRNA(Asn) + L-glutamate + ADP + phosphate + 2 H(+). Functionally, allows the formation of correctly charged Asn-tRNA(Asn) or Gln-tRNA(Gln) through the transamidation of misacylated Asp-tRNA(Asn) or Glu-tRNA(Gln) in organisms which lack either or both of asparaginyl-tRNA or glutaminyl-tRNA synthetases. The reaction takes place in the presence of glutamine and ATP through an activated phospho-Asp-tRNA(Asn) or phospho-Glu-tRNA(Gln). This chain is Aspartyl/glutamyl-tRNA(Asn/Gln) amidotransferase subunit B, found in Thermosipho melanesiensis (strain DSM 12029 / CIP 104789 / BI429).